The following is a 59-amino-acid chain: Large ribosomal subunit protein bL32 (59 aa).

The interval 1–28 is disordered; that stretch reads MAVQQNKKSPSKRGMHRAHDFLTDPPLA.

Belongs to the bacterial ribosomal protein bL32 family.

This Aromatoleum aromaticum (strain DSM 19018 / LMG 30748 / EbN1) (Azoarcus sp. (strain EbN1)) protein is Large ribosomal subunit protein bL32.